The following is a 435-amino-acid chain: Nuclear receptor subfamily 6 group A member 1 (435 aa).

A DNA-binding region (nuclear receptor) is located at residues 11–86 (QRACLICGDR…MGMNRKAIRE (76 aa)). 2 NR C4-type zinc fingers span residues 14–34 (CLIC…CEGC) and 50–69 (CSRD…CQYC). The tract at residues 84-158 (IREDGMPGGR…STPSSSRSME (75 aa)) is disordered. A compositionally biased stretch (polar residues) spans 121–141 (NTSWSNNGDSDHSSPGNAVSE). Low complexity predominate over residues 142-156 (SNQPSPVSTPSSSRS). An NR LBD domain is found at 204-435 (QSHTLINQLL…HSCKTIVTKE (232 aa)).

This sequence belongs to the nuclear hormone receptor family. NR6 subfamily. In terms of assembly, homodimer. In terms of tissue distribution, transiently expressed in differentiating cells of all embryonic germ layers. Expressed in an anterior to posterior concentration gradient from late gastrula to midneurula stages. Shows a complicated spatio-temporal pattern of expression during neurulation, being predominant in the neural plate and neural crest in midneurula embryos. At late tailbud (stage 30), mainly expressed in the head mesenchyme, gill arches and tail tip. Expression persists in the epidermis, somites and endoderm, and in the central nervous system, expression is restricted to the midbrain, hindbrain and part of the spinal cord. Isoforms Oo and Em are both expressed in the brain and isoform Oo is expressed in the germ cells of both the adult testis and ovary.

The protein resides in the cytoplasm. The protein localises to the nucleus. Probable orphan nuclear receptor. Binds to a response element containing repeats of the motif 5'-AGGTCA-3'. Required for anterior-posterior patterning during organogenesis. Acts with chordin to play a role in patterning the midbrain-hindbrain. Isoform Em is required for integrin-mediated cell matrix interaction during neurulation and for the morphogenetic movements leading to formation of the neural tube. Also mediates the effect of retinoic acid on primary neurogenesis. This is Nuclear receptor subfamily 6 group A member 1 from Xenopus laevis (African clawed frog).